We begin with the raw amino-acid sequence, 130 residues long: Small ribosomal subunit protein uS9 (130 aa).

Belongs to the universal ribosomal protein uS9 family.

The sequence is that of Small ribosomal subunit protein uS9 from Verminephrobacter eiseniae (strain EF01-2).